The primary structure comprises 158 residues: Small ribosomal subunit protein uS19 (158 aa).

Belongs to the universal ribosomal protein uS19 family.

Its function is as follows. Protein S19 forms a complex with S13 that binds strongly to the 16S ribosomal RNA. This chain is Small ribosomal subunit protein uS19, found in Pyrobaculum aerophilum (strain ATCC 51768 / DSM 7523 / JCM 9630 / CIP 104966 / NBRC 100827 / IM2).